Reading from the N-terminus, the 308-residue chain is Glutaminase (308 aa).

Substrate contacts are provided by S66, N117, E161, N168, Y192, Y244, and V262.

Belongs to the glutaminase family. As to quaternary structure, homotetramer.

The catalysed reaction is L-glutamine + H2O = L-glutamate + NH4(+). In Klebsiella pneumoniae subsp. pneumoniae (strain ATCC 700721 / MGH 78578), this protein is Glutaminase.